A 278-amino-acid polypeptide reads, in one-letter code: Tryptophan synthase alpha chain (278 aa).

Active-site proton acceptor residues include Glu50 and Asp61.

It belongs to the TrpA family. In terms of assembly, tetramer of two alpha and two beta chains.

It catalyses the reaction (1S,2R)-1-C-(indol-3-yl)glycerol 3-phosphate + L-serine = D-glyceraldehyde 3-phosphate + L-tryptophan + H2O. The protein operates within amino-acid biosynthesis; L-tryptophan biosynthesis; L-tryptophan from chorismate: step 5/5. Functionally, the alpha subunit is responsible for the aldol cleavage of indoleglycerol phosphate to indole and glyceraldehyde 3-phosphate. The chain is Tryptophan synthase alpha chain from Nitrobacter winogradskyi (strain ATCC 25391 / DSM 10237 / CIP 104748 / NCIMB 11846 / Nb-255).